The following is a 328-amino-acid chain: Helicase VP6-A (328 aa).

2 disordered regions span residues 31-128 (DWTE…TGAN) and 180-237 (VAEQ…SVGI). Composition is skewed to basic and acidic residues over residues 36 to 61 (ETNK…EGRN), 71 to 83 (AKET…DRRI), and 96 to 109 (PGER…RGDG). Position 110 (Lys-110) interacts with ATP. Over residues 110–128 (KVGGGGGDADAGVGTTGAN) the composition is skewed to gly residues. Basic and acidic residues-rich tracts occupy residues 180-205 (VAEQ…AAER) and 214-230 (PHGD…KTSE).

The protein belongs to the orbivirus VP6 family. As to quaternary structure, homohexamer.

It is found in the virion. The enzyme catalyses ATP + H2O = ADP + phosphate + H(+). Functionally, ATP dependent RNA helicase essential for RNA packaging and viral transcription. Possesses ss- and dsRNA-binding capacity. The sequence is that of Helicase VP6-A (Segment-9) from Bluetongue virus 1 (isolate South Africa) (BTV 1).